A 315-amino-acid polypeptide reads, in one-letter code: Leucine-rich repeat-containing protein 75B (315 aa).

The disordered stretch occupies residues 1–23 (MGARLGRRAGPEAGSEAGAAAGC). Residues 11-23 (PEAGSEAGAAAGC) show a composition bias toward low complexity. 2 LRR repeats span residues 182–195 (LAVL…LSDE) and 207–220 (LPRL…GNRL). The disordered stretch occupies residues 284–315 (PEGSAAGATTPASTWDSTAAGLGPEPQACCAR). Positions 286 to 297 (GSAAGATTPAST) are enriched in low complexity.

The protein belongs to the LRRC75 family.

In terms of biological role, may suppress myogenic differentiation by modulating MYOG expression and Erk1/2 signaling. The chain is Leucine-rich repeat-containing protein 75B from Homo sapiens (Human).